The chain runs to 231 residues: Large ribosomal subunit protein uL1 (231 aa).

It belongs to the universal ribosomal protein uL1 family. As to quaternary structure, part of the 50S ribosomal subunit.

Its function is as follows. Binds directly to 23S rRNA. The L1 stalk is quite mobile in the ribosome, and is involved in E site tRNA release. Functionally, protein L1 is also a translational repressor protein, it controls the translation of the L11 operon by binding to its mRNA. In Chromobacterium violaceum (strain ATCC 12472 / DSM 30191 / JCM 1249 / CCUG 213 / NBRC 12614 / NCIMB 9131 / NCTC 9757 / MK), this protein is Large ribosomal subunit protein uL1.